The chain runs to 252 residues: Hydroxyacylglutathione hydrolase (252 aa).

Positions 52, 54, 56, 57, 107, 128, and 166 each coordinate Zn(2+).

Belongs to the metallo-beta-lactamase superfamily. Glyoxalase II family. In terms of assembly, monomer. Requires Zn(2+) as cofactor.

The catalysed reaction is an S-(2-hydroxyacyl)glutathione + H2O = a 2-hydroxy carboxylate + glutathione + H(+). Its pathway is secondary metabolite metabolism; methylglyoxal degradation; (R)-lactate from methylglyoxal: step 2/2. Functionally, thiolesterase that catalyzes the hydrolysis of S-D-lactoyl-glutathione to form glutathione and D-lactic acid. In Neisseria meningitidis serogroup C (strain 053442), this protein is Hydroxyacylglutathione hydrolase.